A 206-amino-acid chain; its full sequence is Ribosomal RNA small subunit methyltransferase G (206 aa).

S-adenosyl-L-methionine contacts are provided by residues Gly-74, Leu-79, 125–126 (VE), and Arg-140.

It belongs to the methyltransferase superfamily. RNA methyltransferase RsmG family.

It localises to the cytoplasm. The catalysed reaction is guanosine(527) in 16S rRNA + S-adenosyl-L-methionine = N(7)-methylguanosine(527) in 16S rRNA + S-adenosyl-L-homocysteine. Functionally, specifically methylates the N7 position of guanine in position 527 of 16S rRNA. The sequence is that of Ribosomal RNA small subunit methyltransferase G from Shewanella frigidimarina (strain NCIMB 400).